The sequence spans 213 residues: Gas vesicle protein F (213 aa).

It belongs to the gas vesicle GvpF/GvpL family. As to quaternary structure, binds GvpA.

It localises to the gas vesicle. In terms of biological role, a minor component of the gas vesicle, may be involved in preventing GvpA aggregation during gas vesicle nucleation. Gas vesicles are hollow, gas filled proteinaceous nanostructures found in some microorganisms. They allow positioning of halobacteria at the optimal depth for growth in the poorly aerated, shallow brine pools of their habitat. Expression of a 9.5 kb mc-vac DNA fragment containing 2 divergently transcribed regions (gvpD-gvpE-gvpF-gvpG-gvpH-gvpI-gvpJ-gvpK-gvpL-gvpM and gvpA-gvpC-gvpN-gvpO) allows H.volcanii to produce gas vesicles. This Haloferax mediterranei (strain ATCC 33500 / DSM 1411 / JCM 8866 / NBRC 14739 / NCIMB 2177 / R-4) (Halobacterium mediterranei) protein is Gas vesicle protein F.